We begin with the raw amino-acid sequence, 891 residues long: Alanine--tRNA ligase (891 aa).

Zn(2+) contacts are provided by His-564, His-568, Cys-677, and His-681.

This sequence belongs to the class-II aminoacyl-tRNA synthetase family. Zn(2+) is required as a cofactor.

The protein localises to the cytoplasm. It carries out the reaction tRNA(Ala) + L-alanine + ATP = L-alanyl-tRNA(Ala) + AMP + diphosphate. Functionally, catalyzes the attachment of alanine to tRNA(Ala) in a two-step reaction: alanine is first activated by ATP to form Ala-AMP and then transferred to the acceptor end of tRNA(Ala). Also edits incorrectly charged Ser-tRNA(Ala) and Gly-tRNA(Ala) via its editing domain. In Rhodopseudomonas palustris (strain HaA2), this protein is Alanine--tRNA ligase.